The following is a 174-amino-acid chain: Large ribosomal subunit protein uL10 (174 aa).

This sequence belongs to the universal ribosomal protein uL10 family. In terms of assembly, part of the ribosomal stalk of the 50S ribosomal subunit. The N-terminus interacts with L11 and the large rRNA to form the base of the stalk. The C-terminus forms an elongated spine to which L12 dimers bind in a sequential fashion forming a multimeric L10(L12)X complex.

Functionally, forms part of the ribosomal stalk, playing a central role in the interaction of the ribosome with GTP-bound translation factors. The polypeptide is Large ribosomal subunit protein uL10 (Nitrosospira multiformis (strain ATCC 25196 / NCIMB 11849 / C 71)).